The chain runs to 219 residues: Transmembrane emp24 domain-containing protein 10 (219 aa).

The N-terminal stretch at 1–31 (MSGSSGPQAQRGPCPFALLLLLLLGPSSVLA) is a signal peptide. The interval 1–142 (MSGSSGPQAQ…KNYEEIAKVE (142 aa)) is required for interaction with STX17. Topologically, residues 32 to 185 (ISFHLPVNSR…RDTNESTNTR (154 aa)) are lumenal. In terms of domain architecture, GOLD spans 41–193 (RKCLREEIHK…TRVLYFSIFS (153 aa)). The segment at 147 to 178 (LEVELRRLEDLSESIVNDFAYMKKREEEMRDT) is required for TMED10 and TMED2 cis-Golgi network localization. R171 and R176 each carry dimethylated arginine. N-linked (GlcNAc...) asparagine glycosylation is present at N179. A helical transmembrane segment spans residues 186 to 206 (VLYFSIFSMFCLIGLATWQVF). Residues 204–219 (QVFYLRRFFKAKKLIE) form an interaction with COPG1 region. Over 207 to 219 (YLRRFFKAKKLIE) the chain is Cytoplasmic. Residues 207–219 (YLRRFFKAKKLIE) are interaction with ARF1 and IL1B. Residues 211-212 (FF) carry the COPII vesicle coat-binding motif. The COPI vesicle coat-binding signature appears at 211–219 (FFKAKKLIE).

Belongs to the EMP24/GP25L family. In terms of assembly, predominantly dimeric and to a lesser extent monomeric in the ER. Monomer and dimer in ERGIC and cis-Golgi network. Forms homooligomer (via GOLD domain); the assembly is promoted by direct binding with leaderless cargos and may form a protein channel that facilitates cargo entry into the ERGIC. Forms heterooligomeric complexes with other members of the p24 family such as TMED2, TMED7 and TMED9. Interacts (via GOLD domain) with TMED2 (via GOLD domain); the complex is required for export of TMED10 from the ER to the cis-Golgi network; the complex is proposed to be involved in cis-Golgi network dynamics and / or biogenesis. Associates with the COPI vesicle coat subunits (coatomer). Tetramerization of the cytoplasmic domain at the Golgi membrane in vitro; the complex is proposed to interact with COPI coatomer and induce budding of the vesicles. Interacts with COPG1; the interaction involves TMED10 homodimer. Interacts with ARF1 (GDP-bound); the interaction probably involves a TMED10 oligomer. Interacts with SEC23A, SEC24B, SEC24C and SEC24D components of the coat protein complex II/COPII, indicative of an association of TMED10 with the COPII vesicle coat. Interacts with CD59. Interacts with MPPE1/PGAP5; the complex might recruit and sort GPI-anchored proteins to the ER-exit site, or the interaction might lead to recycling of PGAP5 between the ER and the Golgi. Interacts with F2LR1/PAR2. Interacts with KDELR2/ERD2; the interaction is disrupted by KDELR2 ligand. Found in a complex composed at least of SURF4, TMED2 and TMED10. Associates with the presenilin-dependent gamma-secretase complex. Interacts with STX17; the interaction is direct. Interacts with IL-1; the interaction is direct. Interacts with RAB21 (active GTP-bound form); the interaction is indirect and regulates TMED10 abundance and localization at the Golgi.

The protein localises to the endoplasmic reticulum membrane. It is found in the endoplasmic reticulum-Golgi intermediate compartment membrane. Its subcellular location is the golgi apparatus membrane. It localises to the golgi apparatus. The protein resides in the cis-Golgi network membrane. The protein localises to the trans-Golgi network membrane. It is found in the cytoplasmic vesicle. Its subcellular location is the secretory vesicle membrane. It localises to the cell membrane. The protein resides in the melanosome. In terms of biological role, cargo receptor involved in protein vesicular trafficking and quality control in the endoplasmic reticulum (ER) and Golgi. The p24 protein family is a group of transmembrane proteins that bind coat protein complex I/COPI and coat protein complex II/COPII involved in vesicular trafficking between the membranes. Acts at the lumenal side for incorporation of secretory cargo molecules into transport vesicles and involved in vesicle coat formation at the cytoplasmic side. Mainly functions in the early secretory pathway and cycles between the ER, ER-Golgi intermediate compartment (ERGIC) and Golgi, mediating cargo transport through COPI and COPII-coated vesicles. In COPII vesicle-mediated anterograde transport, involved in the transport of GPI-anchored proteins by acting together with TMED2 as their cargo receptor; the function specifically implies SEC24C and SEC24D of the COPII vesicle coat and lipid raft-like microdomains of the ER. Recognizes GPI anchors structural remodeled in the ER by the GPI inositol-deacylase/PGAP1 and the metallophosphoesterase MPPE1/PGAP5. In COPI vesicle-mediated retrograde transport, involved in the biogenesis of COPI vesicles and vesicle coat recruitment. Involved in trafficking of amyloid beta A4 protein and soluble APP-beta release (independent from the modulation of gamma-secretase activity). Involved in the KDELR2-mediated retrograde transport of the toxin A subunit (CTX-A-K63)together with COPI and the COOH terminus of KDELR2. On Golgi membranes, acts as a primary receptor for ARF1-GDP, a GTP-binding protein involved in COPI-vesicle formation. Increases coatomer-dependent GTPase-activating activity of ARFGAP2 which mediates the hydrolysis of ARF1-bound GTP and therefore modulates protein trafficking from the Golgi apparatus. Involved in the exocytic trafficking of G protein-coupled receptors F2LR1/PAR2 (trypsin and tryspin-like enzyme receptor), OPRM1 (opioid receptor) and P2RY4 (UTD and UDP receptor) from the Golgi to the plasma membrane, thus contributing to receptor resensitization. In addition to its cargo receptor activity, may also act as a protein channel after oligomerization, facilitating the post-translational entry of leaderless cytoplasmic cargo into the ERGIC. Involved in the translocation into ERGIC, the vesicle entry and the secretion of leaderless cargos (lacking the secretion signal sequence), including the mature form of interleukin 1/IL-1 family members, the alpha-crystallin B chain HSPB5, the carbohydrate-binding proteins galectin-1/LGALS1 and galectin-3/LGALS3, the microtubule-associated protein Tau/MAPT, and the annexin A1/ANXA1; the translocation process is dependent on cargo protein unfolding and enhanced by chaperones HSP90AB1 and HSP90B1/GRP9. Could also associates with the presenilin-dependent gamma-secretase complex in order to regulate gamma-cleavages of the amyloid beta A4 protein to yield amyloid-beta 40/Abeta40. In Bos taurus (Bovine), this protein is Transmembrane emp24 domain-containing protein 10 (TMED10).